The chain runs to 480 residues: Ribulose bisphosphate carboxylase large chain (480 aa).

Positions 1–2 are excised as a propeptide; sequence MS. Pro3 carries the N-acetylproline modification. Lys14 bears the N6,N6,N6-trimethyllysine mark. Asn123 and Thr173 together coordinate substrate. Lys175 acts as the Proton acceptor in catalysis. Substrate is bound at residue Lys177. Mg(2+) contacts are provided by Lys201, Asp203, and Glu204. The residue at position 201 (Lys201) is an N6-carboxylysine. His294 functions as the Proton acceptor in the catalytic mechanism. Substrate contacts are provided by Arg295, His327, and Ser379.

The protein belongs to the RuBisCO large chain family. Type I subfamily. In terms of assembly, heterohexadecamer of 8 large chains and 8 small chains; disulfide-linked. The disulfide link is formed within the large subunit homodimers. Mg(2+) serves as cofactor. The disulfide bond which can form in the large chain dimeric partners within the hexadecamer appears to be associated with oxidative stress and protein turnover.

It is found in the plastid. It localises to the chloroplast. It catalyses the reaction 2 (2R)-3-phosphoglycerate + 2 H(+) = D-ribulose 1,5-bisphosphate + CO2 + H2O. The catalysed reaction is D-ribulose 1,5-bisphosphate + O2 = 2-phosphoglycolate + (2R)-3-phosphoglycerate + 2 H(+). RuBisCO catalyzes two reactions: the carboxylation of D-ribulose 1,5-bisphosphate, the primary event in carbon dioxide fixation, as well as the oxidative fragmentation of the pentose substrate in the photorespiration process. Both reactions occur simultaneously and in competition at the same active site. This is Ribulose bisphosphate carboxylase large chain from Rivina humilis (Rougeplant).